The sequence spans 624 residues: Glycosyltransferase AglD (624 aa).

Residue Asp201 is part of the active site. 8 consecutive transmembrane segments (helical) span residues 260-280, 285-305, 381-401, 427-447, 496-518, 532-552, 556-576, and 587-607; these read VTIVAGLLLTVLALALMTLYI, VISVLGDADPALVAAAAVIYV, LLTIAGLAGVVLVGLAATGGL, AAYVATGVGVVAILGVLGIAL, VGLTSLAIWTVDVVTAVVVLLAL, FFAVSVGNLAKVLPLSPGGVG, IAFTVFMAALAPVTPAAALAA, and VTIVGGVGSMLSLNVSLTTAV.

Belongs to the glycosyltransferase 2 family.

Its subcellular location is the cell membrane. The protein operates within cell surface structure biogenesis; S-layer biogenesis. Its function is as follows. Involved in the assembly of a N-linked pentasaccharide that decorates the S-layer glycoprotein and flagellins. Catalyzes the addition of the mannose found at position 5 of the pentasaccharide to its own distinct dolichol phosphate carrier. This chain is Glycosyltransferase AglD (aglD), found in Haloferax volcanii (strain ATCC 29605 / DSM 3757 / JCM 8879 / NBRC 14742 / NCIMB 2012 / VKM B-1768 / DS2) (Halobacterium volcanii).